Reading from the N-terminus, the 366-residue chain is Anthranilate phosphoribosyltransferase (366 aa).

5-phospho-alpha-D-ribose 1-diphosphate contacts are provided by residues G79, 82 to 83 (GD), T87, 89 to 92 (NIST), 107 to 115 (KHGNRAATS), and S119. G79 is a binding site for anthranilate. Residue S91 participates in Mg(2+) binding. N110 is a binding site for anthranilate. R165 is a binding site for anthranilate. The Mg(2+) site is built by D223 and E224. The disordered stretch occupies residues 342-366 (ESLSGKSMSMRSRTSILSPASGERV). The segment covering 345–359 (SGKSMSMRSRTSILS) has biased composition (polar residues).

Belongs to the anthranilate phosphoribosyltransferase family. Homodimer. The cofactor is Mg(2+).

It catalyses the reaction N-(5-phospho-beta-D-ribosyl)anthranilate + diphosphate = 5-phospho-alpha-D-ribose 1-diphosphate + anthranilate. It participates in amino-acid biosynthesis; L-tryptophan biosynthesis; L-tryptophan from chorismate: step 2/5. Its function is as follows. Catalyzes the transfer of the phosphoribosyl group of 5-phosphorylribose-1-pyrophosphate (PRPP) to anthranilate to yield N-(5'-phosphoribosyl)-anthranilate (PRA). The protein is Anthranilate phosphoribosyltransferase of Methanosarcina barkeri (strain Fusaro / DSM 804).